The chain runs to 56 residues: UPF0434 protein ECH_0194 (56 aa).

Belongs to the UPF0434 family.

The chain is UPF0434 protein ECH_0194 from Ehrlichia chaffeensis (strain ATCC CRL-10679 / Arkansas).